The following is a 306-amino-acid chain: Esterase tropF (306 aa).

Catalysis depends on charge relay system residues Ser147, Asp248, and His276.

The protein belongs to the LovG family.

It participates in secondary metabolite biosynthesis. Functionally, esterase; part of the gene cluster that mediates the biosynthesis of the tropolone class of fungal maleic anhydrides. The pathway begins with the synthesis of 3-methylorcinaldehyde by the non-reducing polyketide synthase (PKS) tropA. 3-methylorcinaldehyde is the substrate for the FAD-dependent monooxygenase tropB to yield a dearomatized hydroxycyclohexadione. The 2-oxoglutarate-dependent dioxygenase tropC then performs the oxidative ring expansion to provide the first tropolone metabolite stipitaldehyde. Trop D converts stipitaldehyde into stipitacetal which is in turn converted to stipitalide by the short-chain dehydrogenase/reductase tropE. The next steps involve tropF, tropG, tropH, tropI and tropJ to form successive tropolone maleic anhydrides including stipitaldehydic, stipitatonic and stipitatic acids. This is Esterase tropF from Talaromyces stipitatus (strain ATCC 10500 / CBS 375.48 / QM 6759 / NRRL 1006) (Penicillium stipitatum).